A 447-amino-acid chain; its full sequence is UDP-glycosyltransferase 76B1 (447 aa).

UDP-alpha-D-glucose-binding positions include Ser269, 327-328, 345-353, and 367-370; these read WA, HCGWNSTLE, and FGDQ.

The protein belongs to the UDP-glycosyltransferase family. Expressed in roots, leaves, hydathodes, sepals and style.

Its function is as follows. Glycosylates the amino acid-related molecules isoleucic acid (2-hydroxy-3-methylpentanoic acid) and valic acid (2-hydroxy-3-methylbutyric acid). Acts as a negative regulator of salicylic acid (SA)-dependent plant defense in the absence of pathogens and promotes the jasmonate (JA) response. Negatively influences the onset of senescence. This Arabidopsis thaliana (Mouse-ear cress) protein is UDP-glycosyltransferase 76B1.